The chain runs to 341 residues: tRNA (cytidine(56)-2'-O)-methyltransferase (341 aa).

Residues Leu-79 and 104–108 (GAEKV) contribute to the S-adenosyl-L-methionine site. The region spanning 187 to 294 (IIRHVETVYK…VAHADNLVSM (108 aa)) is the HD domain.

The protein belongs to the aTrm56 family. As to quaternary structure, homodimer.

The protein resides in the cytoplasm. It catalyses the reaction cytidine(56) in tRNA + S-adenosyl-L-methionine = 2'-O-methylcytidine(56) in tRNA + S-adenosyl-L-homocysteine + H(+). Functionally, specifically catalyzes the AdoMet-dependent 2'-O-ribose methylation of cytidine at position 56 in tRNAs. This Picrophilus torridus (strain ATCC 700027 / DSM 9790 / JCM 10055 / NBRC 100828 / KAW 2/3) protein is tRNA (cytidine(56)-2'-O)-methyltransferase.